Here is a 270-residue protein sequence, read N- to C-terminus: uncharacterized protein (270 aa).

Over residues 1 to 10 (MFGLKVKDAT) the composition is skewed to basic and acidic residues. 2 disordered regions span residues 1–115 (MFGL…PTPW) and 215–236 (QTGF…QGEQ). Low complexity-rich tracts occupy residues 26-41 (SSSS…TQRG) and 98-113 (GTSP…GTPT).

This sequence belongs to the adhesin P1 family.

This is an uncharacterized protein from Mycoplasma pneumoniae (strain ATCC 29342 / M129 / Subtype 1) (Mycoplasmoides pneumoniae).